The primary structure comprises 203 residues: Recombination protein RecR (203 aa).

The segment at 56 to 71 (CAVCGNVSDDERCRIC) adopts a C4-type zinc-finger fold. The 101-residue stretch at 79-179 (ALVCVVEEPK…TVTRIASGLP (101 aa)) folds into the Toprim domain.

Belongs to the RecR family.

In terms of biological role, may play a role in DNA repair. It seems to be involved in an RecBC-independent recombinational process of DNA repair. It may act with RecF and RecO. This chain is Recombination protein RecR, found in Mycobacterium ulcerans (strain Agy99).